Reading from the N-terminus, the 382-residue chain is Anhydro-N-acetylmuramic acid kinase (382 aa).

18 to 25 contributes to the ATP binding site; it reads GTSLDGVD.

Belongs to the anhydro-N-acetylmuramic acid kinase family.

The catalysed reaction is 1,6-anhydro-N-acetyl-beta-muramate + ATP + H2O = N-acetyl-D-muramate 6-phosphate + ADP + H(+). It participates in amino-sugar metabolism; 1,6-anhydro-N-acetylmuramate degradation. It functions in the pathway cell wall biogenesis; peptidoglycan recycling. Functionally, catalyzes the specific phosphorylation of 1,6-anhydro-N-acetylmuramic acid (anhMurNAc) with the simultaneous cleavage of the 1,6-anhydro ring, generating MurNAc-6-P. Is required for the utilization of anhMurNAc either imported from the medium or derived from its own cell wall murein, and thus plays a role in cell wall recycling. This Ralstonia nicotianae (strain ATCC BAA-1114 / GMI1000) (Ralstonia solanacearum) protein is Anhydro-N-acetylmuramic acid kinase.